The chain runs to 320 residues: tRNA U34 carboxymethyltransferase (320 aa).

Carboxy-S-adenosyl-L-methionine contacts are provided by residues Lys89, Trp103, Lys108, Gly128, 150–152 (DPT), 179–180 (IE), Met194, Tyr198, and Arg313.

Belongs to the class I-like SAM-binding methyltransferase superfamily. CmoB family. Homotetramer.

It catalyses the reaction carboxy-S-adenosyl-L-methionine + 5-hydroxyuridine(34) in tRNA = 5-carboxymethoxyuridine(34) in tRNA + S-adenosyl-L-homocysteine + H(+). Its function is as follows. Catalyzes carboxymethyl transfer from carboxy-S-adenosyl-L-methionine (Cx-SAM) to 5-hydroxyuridine (ho5U) to form 5-carboxymethoxyuridine (cmo5U) at position 34 in tRNAs. In Glaesserella parasuis serovar 5 (strain SH0165) (Haemophilus parasuis), this protein is tRNA U34 carboxymethyltransferase.